The primary structure comprises 146 residues: Universal stress protein A homolog 2 (146 aa).

Belongs to the universal stress protein A family. In terms of assembly, homodimer.

It is found in the cytoplasm. In terms of biological role, involved in stress response. In Coxiella burnetii (strain RSA 493 / Nine Mile phase I), this protein is Universal stress protein A homolog 2 (uspA2).